Here is a 784-residue protein sequence, read N- to C-terminus: Lon protease (784 aa).

The region spanning 6-207 (LPLMALRDMV…TVITTLTSNI (202 aa)) is the Lon N-terminal domain. 356-363 (GPPGVGKT) lines the ATP pocket. A Lon proteolytic domain is found at 592–773 (EDQIGSTTGL…DQVLKHALVE (182 aa)). Active-site residues include Ser679 and Lys722.

It belongs to the peptidase S16 family. In terms of assembly, homohexamer. Organized in a ring with a central cavity.

It is found in the cytoplasm. It catalyses the reaction Hydrolysis of proteins in presence of ATP.. In terms of biological role, ATP-dependent serine protease that mediates the selective degradation of mutant and abnormal proteins as well as certain short-lived regulatory proteins. Required for cellular homeostasis and for survival from DNA damage and developmental changes induced by stress. Degrades polypeptides processively to yield small peptide fragments that are 5 to 10 amino acids long. Binds to DNA in a double-stranded, site-specific manner. This is Lon protease from Rickettsia typhi (strain ATCC VR-144 / Wilmington).